The chain runs to 435 residues: MKPLTKNNLVAIVGKPNVGKSTLFNRLVGKRVSIVYDQPGVTRDRIYENINWSGKNFRIIDTGGIVVSDQPFVEQIRIQAQIAIEESEIILFVIDGSEEITSDDLYIASILRNSKKKVLVLANKLDNNKNEDYSIYSLGFEDYYKISSVHGEGIGEVLDKVINLMNFENDQDEDLFKIAILGKPNAGKSSLLNALTKQERSIVSEIAGTTRDSIKSTIEIEDQKFFIIDTAGINRKSKLVESVDHYALMRAMGSLDESDLSIIIIDATEELSHFNARIIGYASDKKKPTIIVINKWDLIKKETNTMIEYEKKLREKMPFISWMPIVFISALKSQRLNKLEKVIIQVKNNLSREIKQNLLNDLLVDMQTMNPLTFKGKKLEIKHIKKTNDPVPTFLLFVNNPNIVHFSYLRYIENQIRDYFDFTGCPINLVLKKNK.

2 consecutive EngA-type G domains span residues 8 to 169 (NLVA…NFEN) and 176 to 351 (FKIA…NNLS). GTP-binding positions include 14–21 (GKPNVGKS), 61–65 (DTGGI), 123–126 (NKLD), 182–189 (GKPNAGKS), 229–233 (DTAGI), and 294–297 (NKWD). Positions 352-435 (REIKQNLLND…PINLVLKKNK (84 aa)) constitute a KH-like domain.

This sequence belongs to the TRAFAC class TrmE-Era-EngA-EngB-Septin-like GTPase superfamily. EngA (Der) GTPase family. Associates with the 50S ribosomal subunit.

GTPase that plays an essential role in the late steps of ribosome biogenesis. The sequence is that of GTPase Der from Mycoplasmopsis pulmonis (strain UAB CTIP) (Mycoplasma pulmonis).